The following is a 24-amino-acid chain: Brevinin-1Pe (24 aa).

Cys18 and Cys24 are joined by a disulfide.

As to expression, expressed by the skin glands.

It localises to the secreted. Functionally, antibacterial activity against Gram-positive bacterium S.aureus and Gram-negative bacterium E.coli. Has activity against C.albicans. The chain is Brevinin-1Pe from Lithobates pipiens (Northern leopard frog).